Here is a 298-residue protein sequence, read N- to C-terminus: N-acetylmuramic acid 6-phosphate etherase (298 aa).

The SIS domain maps to 55–218; the sequence is IHAQVSGGGR…STGLMIKSGK (164 aa). The active-site Proton donor is E83. The active site involves E114.

Belongs to the GCKR-like family. MurNAc-6-P etherase subfamily. In terms of assembly, homodimer.

The enzyme catalyses N-acetyl-D-muramate 6-phosphate + H2O = N-acetyl-D-glucosamine 6-phosphate + (R)-lactate. Its pathway is amino-sugar metabolism; 1,6-anhydro-N-acetylmuramate degradation. The protein operates within amino-sugar metabolism; N-acetylmuramate degradation. It functions in the pathway cell wall biogenesis; peptidoglycan recycling. In terms of biological role, specifically catalyzes the cleavage of the D-lactyl ether substituent of MurNAc 6-phosphate, producing GlcNAc 6-phosphate and D-lactate. Together with AnmK, is also required for the utilization of anhydro-N-acetylmuramic acid (anhMurNAc) either imported from the medium or derived from its own cell wall murein, and thus plays a role in cell wall recycling. The protein is N-acetylmuramic acid 6-phosphate etherase of Shigella boydii serotype 18 (strain CDC 3083-94 / BS512).